Here is an 88-residue protein sequence, read N- to C-terminus: MIKNAFISLQEKKEESRGSVEFQVFSFTNKIRRLTSHLELHRKDYLSQRGLRKILGKRQRLLVYLSKKNRVRYKDLINKLNIRELKTR.

Belongs to the universal ribosomal protein uS15 family. As to quaternary structure, part of the 30S ribosomal subunit.

It is found in the plastid. Its subcellular location is the chloroplast. This chain is Small ribosomal subunit protein uS15c (rps15), found in Aethionema grandiflorum (Persian stone-cress).